The chain runs to 329 residues: uncharacterized protein (329 aa).

2 helical membrane-spanning segments follow: residues 13 to 35 (IPVLIISLITLVASAYALYWATI) and 229 to 248 (VIPAALCTVSIIFAGLSVVY).

It localises to the cell membrane. This is an uncharacterized protein from Archaeoglobus fulgidus (strain ATCC 49558 / DSM 4304 / JCM 9628 / NBRC 100126 / VC-16).